Reading from the N-terminus, the 243-residue chain is Uridylate kinase (243 aa).

12-15 is an ATP binding site; the sequence is KLSG. The interval 20-25 is involved in allosteric activation by GTP; that stretch reads GAKGFG. ATP-binding residues include Gly-55 and Arg-59. UMP-binding positions include Asp-74 and 135–142; that span reads TGNPYFTT. Residues Gln-163, Tyr-169, and Asp-172 each contribute to the ATP site.

This sequence belongs to the UMP kinase family. In terms of assembly, homohexamer.

Its subcellular location is the cytoplasm. The enzyme catalyses UMP + ATP = UDP + ADP. It participates in pyrimidine metabolism; CTP biosynthesis via de novo pathway; UDP from UMP (UMPK route): step 1/1. Its activity is regulated as follows. Allosterically activated by GTP. Inhibited by UTP. In terms of biological role, catalyzes the reversible phosphorylation of UMP to UDP. This chain is Uridylate kinase, found in Symbiobacterium thermophilum (strain DSM 24528 / JCM 14929 / IAM 14863 / T).